The sequence spans 310 residues: MRVIDSHTAGEPTRVVLDGGPDLGSGTLAERAARLEAEHLDFCASVVLEPRGHDAIIGALLVPPSDPACAAGVIYFNNLQNLGMCGHATIGLGVTLAHLGRIRPGRHRFETPVGVVEIDLIDANTVSVVNIESYRLAKDVTVEVEGVGPVTGDVAWGGNWFFLVKNSPIALTGANIRPLTDLTLKIRTALEKAGVTGKDGAWIDHIELFGPAEDPAAQSRNFVLCPGGAYDRSPCGTGCSAKLACLAADGALAPGQDYLQESVIGSTYKISYQPGPGGGVIPTITGQAFVTSDATLIFNPADPYRSGIRL.

Residue C85 is the Proton acceptor of the active site. Residues 86-87 (GH), H205, and D231 contribute to the substrate site. C235 functions as the Proton donor in the catalytic mechanism. Substrate is bound at residue 236–237 (GT).

The protein belongs to the proline racemase family.

The enzyme catalyses trans-4-hydroxy-L-proline = cis-4-hydroxy-D-proline. Catalyzes the epimerization of trans-4-hydroxy-L-proline (t4LHyp) to cis-4-hydroxy-D-proline (c4DHyp). May be involved in a degradation pathway of t4LHyp, which would allow L.aggregata to grow on t4LHyp as a sole carbon source. Displays no proline racemase activity. This Roseibium aggregatum (strain ATCC 25650 / DSM 13394 / JCM 20685 / NBRC 16684 / NCIMB 2208 / IAM 12614 / B1) (Stappia aggregata) protein is 4-hydroxyproline 2-epimerase.